We begin with the raw amino-acid sequence, 189 residues long: Peptidyl-tRNA hydrolase (189 aa).

Tyr-15 contributes to the tRNA binding site. His-20 serves as the catalytic Proton acceptor. Positions 66, 68, and 114 each coordinate tRNA.

This sequence belongs to the PTH family. As to quaternary structure, monomer.

It is found in the cytoplasm. The enzyme catalyses an N-acyl-L-alpha-aminoacyl-tRNA + H2O = an N-acyl-L-amino acid + a tRNA + H(+). Hydrolyzes ribosome-free peptidyl-tRNAs (with 1 or more amino acids incorporated), which drop off the ribosome during protein synthesis, or as a result of ribosome stalling. In terms of biological role, catalyzes the release of premature peptidyl moieties from peptidyl-tRNA molecules trapped in stalled 50S ribosomal subunits, and thus maintains levels of free tRNAs and 50S ribosomes. This is Peptidyl-tRNA hydrolase from Streptococcus mutans serotype c (strain ATCC 700610 / UA159).